The following is a 371-amino-acid chain: Chaperone protein DnaJ (371 aa).

The J domain maps to 5–70; the sequence is CYYEILNVSK…SKRSRYDQFG (66 aa). The CR-type zinc finger occupies 127–204; the sequence is GVEKEITIPR…CYGNGKVKKQ (78 aa). Cys-140, Cys-143, Cys-156, Cys-159, Cys-178, Cys-181, Cys-192, and Cys-195 together coordinate Zn(2+). CXXCXGXG motif repeat units follow at residues 140-147, 156-163, 178-185, and 192-199; these read CDSCDGTG, CHACHGQG, CPVCNGTG, and CDACYGNG.

Belongs to the DnaJ family. In terms of assembly, homodimer. It depends on Zn(2+) as a cofactor.

It localises to the cytoplasm. Its function is as follows. Participates actively in the response to hyperosmotic and heat shock by preventing the aggregation of stress-denatured proteins and by disaggregating proteins, also in an autonomous, DnaK-independent fashion. Unfolded proteins bind initially to DnaJ; upon interaction with the DnaJ-bound protein, DnaK hydrolyzes its bound ATP, resulting in the formation of a stable complex. GrpE releases ADP from DnaK; ATP binding to DnaK triggers the release of the substrate protein, thus completing the reaction cycle. Several rounds of ATP-dependent interactions between DnaJ, DnaK and GrpE are required for fully efficient folding. Also involved, together with DnaK and GrpE, in the DNA replication of plasmids through activation of initiation proteins. The sequence is that of Chaperone protein DnaJ from Francisella tularensis subsp. tularensis (strain WY96-3418).